The chain runs to 565 residues: Anaphase-promoting complex subunit 7 (565 aa).

10 TPR repeats span residues 101-134 (EIEV…RQRT), 169-202 (LDAI…LDWL), 203-236 (SVWI…LRDN), 237-270 (VDLL…DPYL), 339-372 (VQAL…APCR), 373-406 (LDCY…LGAN), 407-439 (AQTL…AQRP), 442-474 (VKAV…NQSD), 475-508 (CVLH…DPND), and 509-531 (QKSL…TQEE). Residue K229 is modified to N6-acetyllysine. Positions 513–523 (EGMQKMEKEES) are enriched in basic and acidic residues. The segment at 513–565 (EGMQKMEKEESPTDATQEEDVDDMEGSGEEGDLEGSDSEAAQWADQEQWFGMQ) is disordered. Residues 528-549 (TQEEDVDDMEGSGEEGDLEGSD) are compositionally biased toward acidic residues.

This sequence belongs to the APC7 family. V-shaped homodimer. The mammalian APC/C is composed at least of 14 distinct subunits ANAPC1, ANAPC2, CDC27/APC3, ANAPC4, ANAPC5, CDC16/APC6, ANAPC7, CDC23/APC8, ANAPC10, ANAPC11, CDC26/APC12, ANAPC13, ANAPC15 and ANAPC16 that assemble into a complex of at least 19 chains with a combined molecular mass of around 1.2 MDa; APC/C interacts with FZR1 and FBXO5.

It is found in the cytoplasm. It localises to the cytoskeleton. Its subcellular location is the nucleus. The protein resides in the spindle. It participates in protein modification; protein ubiquitination. Its function is as follows. Component of the anaphase promoting complex/cyclosome (APC/C), a cell cycle-regulated E3 ubiquitin ligase that controls progression through mitosis and the G1 phase of the cell cycle. The APC/C complex acts by mediating ubiquitination and subsequent degradation of target proteins: it mainly mediates the formation of 'Lys-11'-linked polyubiquitin chains and, to a lower extent, the formation of 'Lys-48'- and 'Lys-63'-linked polyubiquitin chains. The APC/C complex catalyzes assembly of branched 'Lys-11'-/'Lys-48'-linked branched ubiquitin chains on target proteins. APC7 is not required for the assembly of the APC/C complex, but has an enzyme-substrate adapter activity mediating the processive ubiquitination of specific substrates. Involved in brain development through the specific ubiquitination and clearance of MKI67 from constitutive heterochromatin after neuronal progenitors exit mitosis. This Mus musculus (Mouse) protein is Anaphase-promoting complex subunit 7 (Anapc7).